Consider the following 311-residue polypeptide: Forkhead box protein I2 (311 aa).

Residues 99–193 (RPPYSYSALI…DNGNFRRKRR (95 aa)) constitute a DNA-binding region (fork-head). Disordered stretches follow at residues 188 to 237 (FRRK…TTTC) and 263 to 294 (FSLR…QTGA). Low complexity predominate over residues 219 to 231 (STPQDPQTSPSPS).

It localises to the nucleus. Possible transcriptional activator. The protein is Forkhead box protein I2 of Mus musculus (Mouse).